Consider the following 1056-residue polypeptide: Pleckstrin homology domain-containing family M member 1 (1056 aa).

In terms of domain architecture, RUN spans 41-183 (TSEDGDANTM…LSFELSYKSA (143 aa)). Disordered regions lie at residues 215–245 (QRKESLDSISHSSGSEDIEVHHSGHKIRRNQ), 277–303 (GSKSPDHCEEPMSCDSDLGTANAEDSD), and 360–422 (PAQA…QAHD). Ser219 carries the phosphoserine modification. Positions 389-404 (PVESTSGQQPSSTVSE) are enriched in polar residues. 2 positions are modified to phosphoserine: Ser432 and Ser435. The segment at 451 to 483 (SREQPLESASDHPIASYRGTPGSRPGLHRHFSQ) is disordered. The residue at position 490 (Ser490) is a Phosphoserine. Positions 534-625 (GLMKLGTVER…WLDRVREALQ (92 aa)) constitute a PH 1 domain. Residues 632-638 (EDEWVNV) carry the LIR motif. The tract at residues 654–1056 (CLSPSDLLSE…RKYQEQNIFA (403 aa)) is interaction with RAB7A. Residues 683–777 (DAIKESLLYL…WRDLVRKVLA (95 aa)) form the PH 2 domain. Residues 986-1040 (QHVYHCDLCTQRGFICQICQHHDIIFPFEFDTTVRCAECKTVFHQSCQAVVKKGC) form a Phorbol-ester/DAG-type zinc finger.

Interacts (via N- and C-terminus) with RAB7A (GTP-bound form). Simultaneously interacts with RAB7A and ARL8B; bringing about clustering and fusion of late endosomes and lysosomes. Interacts (via RUN domain) with ARL8B (GTP-bound form); the interaction is required for PLEKHM1 localization to lysosomes and for ARL8B function in delivery and degradation of endocytic and autophagic cargo in lysosomes. PLEKHM1 and PLEKHM2 compete for interaction with ARL8B. Interacts with ARL8A; the interaction is weaker than with ARL8B. Interacts with VPS41, VPS11, VPS18, VPS33A and VPS39; indicative for an association with the HOPS complex; the interactions with, at least, VPS41, VPS11, VPS18 and VPS33A require ARL8B. Interacts with GABARAP, GABARAPL, GABARAPL2, MAP1LC3A, MAP1LC3B and MAP1LC3C. Interacts with PAFAH1B. Interacts (via N- and C-terminus) with NDEL1. Interacts (via C-terminus) with MAP3K7. Interacts (via N- and C-terminus) with FAM98A. Interacts (via C-terminus) with DEF8; this interaction is weak but increased in a RAB7A-dependent manner. In colon carcinoma and breast carcinoma cells, it interacts with sialyl-lex-positive protein. As to quaternary structure, (Microbial infection) Interacts with Salmonella typhimurium sifA. In terms of tissue distribution, expressed in placenta, liver, prostate, thymus, spleen, ovary, colon, colon carcinoma and peripheral blood lymphocytes (PBL). Weakly expressed in brain, lung, kidney, and testis. No expression in heart, skeletal muscle, pancreas and small intestine. Predominantly expressed in the breast carcinoma cell line MCF-7.

The protein localises to the autolysosome membrane. It is found in the endosome membrane. It localises to the late endosome membrane. Its subcellular location is the lysosome membrane. In terms of biological role, acts as a multivalent adapter protein that regulates Rab7-dependent and HOPS complex-dependent fusion events in the endolysosomal system and couples autophagic and the endocytic trafficking pathways. Acts as a dual effector of RAB7A and ARL8B that simultaneously binds these GTPases, bringing about clustering and fusion of late endosomes and lysosomes. Required for late stages of endolysosomal maturation, facilitating both endocytosis-mediated degradation of growth factor receptors and autophagosome clearance. Interaction with Arl8b is a crucial factor in the terminal maturation of autophagosomes and to mediate autophagosome-lysosome fusion. Positively regulates lysosome peripheral distribution and ruffled border formation in osteoclasts. May be involved in negative regulation of endocytic transport from early endosome to late endosome/lysosome implicating its association with Rab7. May have a role in sialyl-lex-mediated transduction of apoptotic signals. Involved in bone resorption. Its function is as follows. (Microbial infection) In case of infection contributes to Salmonella typhimurium pathogenesis by supporting the integrity of the Salmonella-containing vacuole (SCV) probably in concert with the HOPS complex and Rab7. This Homo sapiens (Human) protein is Pleckstrin homology domain-containing family M member 1.